The sequence spans 411 residues: MAMVVSVWRDPQEDVAGGPPSGPNPAAQPAREQQQAASAAPHTPQTPSQPGPPSTPGTAGDKGSQNSGQSQQHIECVVCGDKSSGKHYGQFTCEGCKSFFKRSVRRNLTYTCRANRNCPIDQHHRNQCQYCRLKKCLKVGMRREAVQRGRMPPTQPNPGQYALTNGDPLNGHCYLSGYISLLLRAEPYPTSRYGSQCMQPNNIMGIENICELAARLLFSAVEWARNIPFFPDLQITDQVSLLRLTWSELFVLNAAQCSMPLHVAPLLAAAGLHASPMSADRVVAFMDHIRIFQEQVEKLKALHVDSAEYSCIKAIVLFTSDACGLSDAAHIESLQEKSQCALEEYVRSQYPNQPSRFGKLLLRLPSLRTVSSSVIEQLFFVRLVGKTPIETLIRDMLLSGSSFNWPYMSIQ.

A disordered region spans residues 1-68; sequence MAMVVSVWRD…AGDKGSQNSG (68 aa). A compositionally biased stretch (low complexity) spans 24 to 46; the sequence is NPAAQPAREQQQAASAAPHTPQT. A DNA-binding region (nuclear receptor) is located at residues 73–148; it reads HIECVVCGDK…VGMRREAVQR (76 aa). 2 consecutive NR C4-type zinc fingers follow at residues 76–96 and 112–136; these read CVVC…CEGC and CRAN…LKKC. The 227-residue stretch at 174-400 folds into the NR LBD domain; the sequence is YLSGYISLLL…TLIRDMLLSG (227 aa).

This sequence belongs to the nuclear hormone receptor family. NR2 subfamily. First expressed in 11-12 hour embryos. In the rostral brain of 13 hour embryos, expressed within the anterior half of the midbrain and the posterior part of the diencephalon. In the presumptive hindbrain, expressed in a segment-like stripe in the anterior region, resembling the presumptive rhombomere units of the hindbrain. Also detected in the intermediate mesoderm, posterior to the first somite. As somitogenesis proceeds, expression extends posteriorly and flanks the 10 most anterior somites. Expression changes extensively both in level and expansion of domains between 13 and 20 hours. In the rostral brain, expression extends to include a major part of the diencephalon and a caudal portion of the telencephalon. Within the hindbrain, strongly expressed in the two most anterior rhombomeres, and a lower but uniform expression is seen to extend throughout rhombomere 7. In 28 hour embryos, higher and more uniform expression is seen in both rostral and hindbrain areas. Also expressed in the retina of the eye.

It localises to the nucleus. Functionally, putative transcription factor that is required in photoreceptor cells precursors during eye development. The protein is Nuclear receptor subfamily 2 group F member 1-A (nr2f1a) of Danio rerio (Zebrafish).